A 426-amino-acid polypeptide reads, in one-letter code: Serine--tRNA ligase (426 aa).

L-serine is bound at residue 231-233; the sequence is TSE. 262 to 264 contributes to the ATP binding site; the sequence is RSE. Residue E285 coordinates L-serine. Residue 349–352 coordinates ATP; that stretch reads EISS. S385 contributes to the L-serine binding site.

It belongs to the class-II aminoacyl-tRNA synthetase family. Type-1 seryl-tRNA synthetase subfamily. In terms of assembly, homodimer. The tRNA molecule binds across the dimer.

The protein resides in the cytoplasm. The enzyme catalyses tRNA(Ser) + L-serine + ATP = L-seryl-tRNA(Ser) + AMP + diphosphate + H(+). It catalyses the reaction tRNA(Sec) + L-serine + ATP = L-seryl-tRNA(Sec) + AMP + diphosphate + H(+). Its pathway is aminoacyl-tRNA biosynthesis; selenocysteinyl-tRNA(Sec) biosynthesis; L-seryl-tRNA(Sec) from L-serine and tRNA(Sec): step 1/1. Its function is as follows. Catalyzes the attachment of serine to tRNA(Ser). Is also able to aminoacylate tRNA(Sec) with serine, to form the misacylated tRNA L-seryl-tRNA(Sec), which will be further converted into selenocysteinyl-tRNA(Sec). The polypeptide is Serine--tRNA ligase (Legionella pneumophila (strain Lens)).